Reading from the N-terminus, the 953-residue chain is UPF0746 protein DDB_G0281301 (953 aa).

The span at M1–E10 shows a compositional bias: basic and acidic residues. The interval M1–L23 is disordered. Residues N11 to D21 are compositionally biased toward acidic residues. One can recognise an SAP domain in the interval Y35 to F69.

The protein belongs to the UPF0746 family.

The chain is UPF0746 protein DDB_G0281301 from Dictyostelium discoideum (Social amoeba).